The following is a 190-amino-acid chain: Ribosome maturation factor RimM (190 aa).

In terms of domain architecture, PRC barrel spans glutamate 102–aspartate 190.

The protein belongs to the RimM family. As to quaternary structure, binds ribosomal protein uS19.

It is found in the cytoplasm. Its function is as follows. An accessory protein needed during the final step in the assembly of 30S ribosomal subunit, possibly for assembly of the head region. Essential for efficient processing of 16S rRNA. May be needed both before and after RbfA during the maturation of 16S rRNA. It has affinity for free ribosomal 30S subunits but not for 70S ribosomes. The sequence is that of Ribosome maturation factor RimM from Bordetella avium (strain 197N).